The primary structure comprises 757 residues: Receptor protein kinase-like protein At4g34220 (757 aa).

Residues 1–26 (MTSNRSNLLFSLVLFHFLFVPTQLQA) form the signal peptide. LRR repeat units lie at residues 104–126 (YLRILDLSSNFFNGSLPDSVFNA), 128–150 (ELQSISLGSNNLSGDLPKSVNSV), 152–174 (NLQLLNLSANAFTGEIPLNISLL), 176–198 (NLTVVSLSKNTFSGDIPSGFEAA), 199–219 (QILDLSSNLLNGSLPKDLGGK), 220–242 (SLHYLNLSHNKVLGEISPNFAEK), and 245–267 (ANATVDLSFNNLTGPIPSSLSLL). A helical membrane pass occupies residues 339 to 359 (IAAITVADIVGLAFIGLLVLY). One can recognise a Protein kinase domain in the interval 471–753 (KASAYILGTT…KELVQVLEKI (283 aa)). Ser-473 bears the Phosphoserine mark. A Phosphothreonine modification is found at Thr-494. Ser-553 carries the post-translational modification Phosphoserine. The disordered stretch occupies residues 633-654 (ARESHTTGPTSSSPYQPPEWST). 2 positions are modified to phosphothreonine: Thr-638 and Thr-639. The segment covering 638–654 (TTGPTSSSPYQPPEWST) has biased composition (polar residues).

Belongs to the protein kinase superfamily.

It localises to the membrane. This chain is Receptor protein kinase-like protein At4g34220, found in Arabidopsis thaliana (Mouse-ear cress).